The primary structure comprises 347 residues: NADH-ubiquinone oxidoreductase chain 2 (347 aa).

9 helical membrane passes run 5–22, 26–45, 60–80, 150–170, 178–198, 200–220, 237–257, 274–294, and 327–347; these read ILAIVMSTVISGTIMVLI, WLTIWIGFEMNMLAIIPILM, FLTQATASMLLMLGIIINLLL, NPNLLMAMAIMSVLVGGWGGL, ILAYSSIAHMGWMIAVTTYNP, LMLLNLTIYITMTLGTFMLFM, LPLIASLILMTMLSLGGLPPL, DMAIMATFMAMTALLNLYFYM, and PPLIMISTMLLPLTPMVLTLF.

The protein belongs to the complex I subunit 2 family. As to quaternary structure, core subunit of respiratory chain NADH dehydrogenase (Complex I) which is composed of 45 different subunits. Interacts with TMEM242.

It is found in the mitochondrion inner membrane. It catalyses the reaction a ubiquinone + NADH + 5 H(+)(in) = a ubiquinol + NAD(+) + 4 H(+)(out). Core subunit of the mitochondrial membrane respiratory chain NADH dehydrogenase (Complex I) which catalyzes electron transfer from NADH through the respiratory chain, using ubiquinone as an electron acceptor. Essential for the catalytic activity and assembly of complex I. In Martes zibellina (Sable), this protein is NADH-ubiquinone oxidoreductase chain 2.